We begin with the raw amino-acid sequence, 594 residues long: Sodium-dependent glucose transporter 1 (594 aa).

11 helical membrane passes run 77–97 (WLVS…ISVL), 115–137 (LSYI…GILF), 144–161 (LLLG…SGTP), 166–186 (AWVL…LDTG), 205–225 (ALHF…KLLF), 269–289 (IVIG…YFCI), 311–331 (TLII…VAYG), 349–371 (AAGL…IFFA), 393–413 (LLCL…LYGI), 439–459 (IFVV…GFLL), and 467–487 (LLMY…PVLY).

This sequence belongs to the major facilitator superfamily.

The protein resides in the apical cell membrane. Functionally, may function as a sodium-dependent glucose transporter. Potential channels for urea in the inner medulla of kidney. The protein is Sodium-dependent glucose transporter 1 (mfsd4b) of Danio rerio (Zebrafish).